The primary structure comprises 156 residues: MKLYNEFINIAKTFNKELDIIPLLYGSLGLEKVTGLDFSPEDIDLLIPLIFLEEKWEKLKKVMELHGYKMVDLHEHEFKKTNTKIGISYIEDLKPFADVDYNNLEIFEDGGAKYHLLTIDDYLKIYKKSLLDGYRRRKKNHKDQSKINILNKLIRN.

It to L.lactis TrpF C-terminal region.

This is an uncharacterized protein from Bacillus subtilis (strain 168).